Reading from the N-terminus, the 260-residue chain is Hydroxyethylthiazole kinase 1 (260 aa).

A substrate-binding site is contributed by Met39. ATP contacts are provided by Arg115 and Thr160. Residue Gly187 participates in substrate binding.

It belongs to the Thz kinase family. Mg(2+) serves as cofactor.

The catalysed reaction is 5-(2-hydroxyethyl)-4-methylthiazole + ATP = 4-methyl-5-(2-phosphooxyethyl)-thiazole + ADP + H(+). It participates in cofactor biosynthesis; thiamine diphosphate biosynthesis; 4-methyl-5-(2-phosphoethyl)-thiazole from 5-(2-hydroxyethyl)-4-methylthiazole: step 1/1. Its function is as follows. Catalyzes the phosphorylation of the hydroxyl group of 4-methyl-5-beta-hydroxyethylthiazole (THZ). The protein is Hydroxyethylthiazole kinase 1 of Streptococcus pneumoniae serotype 4 (strain ATCC BAA-334 / TIGR4).